The primary structure comprises 94 residues: Large ribosomal subunit protein bL27 (94 aa).

Positions 1–9 are excised as a propeptide; the sequence is MLKLNLQFF. Positions 13-32 are disordered; that stretch reads KGLGSTKNGRDSESKRLGAK. Over residues 20-32 the composition is skewed to basic and acidic residues; sequence NGRDSESKRLGAK.

It belongs to the bacterial ribosomal protein bL27 family. Post-translationally, the N-terminus is cleaved by ribosomal processing cysteine protease Prp.

This Staphylococcus saprophyticus subsp. saprophyticus (strain ATCC 15305 / DSM 20229 / NCIMB 8711 / NCTC 7292 / S-41) protein is Large ribosomal subunit protein bL27.